The following is a 473-amino-acid chain: Adenosylhomocysteinase (473 aa).

Residues T60, D135, and E197 each contribute to the substrate site. 198–200 provides a ligand contact to NAD(+); the sequence is TTT. Residues K227 and D231 each contribute to the substrate site. NAD(+) contacts are provided by residues N232, 261 to 266, E284, N319, 340 to 342, and N385; these read GFGDVG and IGH.

This sequence belongs to the adenosylhomocysteinase family. It depends on NAD(+) as a cofactor.

It is found in the cytoplasm. It carries out the reaction S-adenosyl-L-homocysteine + H2O = L-homocysteine + adenosine. The protein operates within amino-acid biosynthesis; L-homocysteine biosynthesis; L-homocysteine from S-adenosyl-L-homocysteine: step 1/1. In terms of biological role, may play a key role in the regulation of the intracellular concentration of adenosylhomocysteine. The protein is Adenosylhomocysteinase of Bradyrhizobium diazoefficiens (strain JCM 10833 / BCRC 13528 / IAM 13628 / NBRC 14792 / USDA 110).